The primary structure comprises 414 residues: FAD-dependent monooxygenase adaC (414 aa).

5 residues coordinate FAD: E32, A43, R115, D325, and G338.

It belongs to the paxM FAD-dependent monooxygenase family. Requires FAD as cofactor.

It catalyses the reaction 3-(2,4-dioxopentyl)-3,6,8,9-tetrahydroxy-1-oxo-1,2,3,4-tetrahydroanthracene-2-carboxyl-[ACP] + NADPH + O2 + H(+) = 3-(2,4-dioxopentyl)-2,3,6,8,9-pentahydroxy-1-oxo-1,2,3,4-tetrahydroanthracene-2-carboxyl-[ACP] + NADP(+) + H2O. Its pathway is secondary metabolite biosynthesis. FAD-dependent monooxygenase; part of the gene cluster that mediates the biosynthesis of the linear tetracyclic TAN-1612 neuropeptide Y receptor antagonist. The decaketide backbone of TAN-1612 is synthesized by the non-reducing polyketide synthase adaA via condensation of one acetyl-CoA starter unit with 9 malonyl-CoA units. The FAD-dependent monooxygenase adaC then performs hydroxylation at C2 while the polaketide chain is still attached to the NRPKS adaA. The alpha-hydroxylation step at C2 appears to be crucial for the following C18-C1 Claisen cyclization and release of the C9-hydroxyl version of TAN-1612 from the NRPKS adaA, two steps performed by the lactamase-like protein adaB. Finally, the O-methyltransferase adaD performs the C9 O-methylation to complete the biosynthesis of TAN-1612. This is FAD-dependent monooxygenase adaC from Aspergillus niger.